Here is a 141-residue protein sequence, read N- to C-terminus: Nucleoside diphosphate kinase (141 aa).

The ATP site is built by Lys11, Phe59, Arg87, Thr93, Arg104, and Asn114. His117 (pros-phosphohistidine intermediate) is an active-site residue.

This sequence belongs to the NDK family. As to quaternary structure, homotetramer. Requires Mg(2+) as cofactor.

The protein localises to the cytoplasm. It catalyses the reaction a 2'-deoxyribonucleoside 5'-diphosphate + ATP = a 2'-deoxyribonucleoside 5'-triphosphate + ADP. The enzyme catalyses a ribonucleoside 5'-diphosphate + ATP = a ribonucleoside 5'-triphosphate + ADP. In terms of biological role, major role in the synthesis of nucleoside triphosphates other than ATP. The ATP gamma phosphate is transferred to the NDP beta phosphate via a ping-pong mechanism, using a phosphorylated active-site intermediate. This chain is Nucleoside diphosphate kinase, found in Burkholderia cenocepacia (strain HI2424).